The chain runs to 282 residues: Probable endonuclease 4 (282 aa).

Residues H67, H107, E144, D178, H181, H215, D228, H230, and E260 each contribute to the Zn(2+) site.

It belongs to the AP endonuclease 2 family. Zn(2+) is required as a cofactor.

It catalyses the reaction Endonucleolytic cleavage to 5'-phosphooligonucleotide end-products.. In terms of biological role, endonuclease IV plays a role in DNA repair. It cleaves phosphodiester bonds at apurinic or apyrimidinic (AP) sites, generating a 3'-hydroxyl group and a 5'-terminal sugar phosphate. This is Probable endonuclease 4 from Methanoculleus marisnigri (strain ATCC 35101 / DSM 1498 / JR1).